Here is a 366-residue protein sequence, read N- to C-terminus: Protein-glutamate methylesterase/protein-glutamine glutaminase (366 aa).

In terms of domain architecture, Response regulatory spans 5-123 (RVLVVDDSVV…SVGRSMEQVR (119 aa)). A 4-aspartylphosphate modification is found at Asp-56. One can recognise a CheB-type methylesterase domain in the interval 163 to 355 (PLGGHRLLVI…PEILRRLARQ (193 aa)). Catalysis depends on residues Ser-175, His-201, and Asp-297.

This sequence belongs to the CheB family. Phosphorylated by CheA. Phosphorylation of the N-terminal regulatory domain activates the methylesterase activity.

The protein resides in the cytoplasm. It carries out the reaction [protein]-L-glutamate 5-O-methyl ester + H2O = L-glutamyl-[protein] + methanol + H(+). It catalyses the reaction L-glutaminyl-[protein] + H2O = L-glutamyl-[protein] + NH4(+). Its function is as follows. Involved in chemotaxis. Part of a chemotaxis signal transduction system that modulates chemotaxis in response to various stimuli. Catalyzes the demethylation of specific methylglutamate residues introduced into the chemoreceptors (methyl-accepting chemotaxis proteins or MCP) by CheR. Also mediates the irreversible deamidation of specific glutamine residues to glutamic acid. This is Protein-glutamate methylesterase/protein-glutamine glutaminase from Nocardioides sp. (strain ATCC BAA-499 / JS614).